The primary structure comprises 975 residues: Glycine dehydrogenase (decarboxylating) (975 aa).

Lys-723 bears the N6-(pyridoxal phosphate)lysine mark.

This sequence belongs to the GcvP family. In terms of assembly, the glycine cleavage system is composed of four proteins: P, T, L and H. The cofactor is pyridoxal 5'-phosphate.

It carries out the reaction N(6)-[(R)-lipoyl]-L-lysyl-[glycine-cleavage complex H protein] + glycine + H(+) = N(6)-[(R)-S(8)-aminomethyldihydrolipoyl]-L-lysyl-[glycine-cleavage complex H protein] + CO2. Functionally, the glycine cleavage system catalyzes the degradation of glycine. The P protein binds the alpha-amino group of glycine through its pyridoxal phosphate cofactor; CO(2) is released and the remaining methylamine moiety is then transferred to the lipoamide cofactor of the H protein. The polypeptide is Glycine dehydrogenase (decarboxylating) (Burkholderia ambifaria (strain ATCC BAA-244 / DSM 16087 / CCUG 44356 / LMG 19182 / AMMD) (Burkholderia cepacia (strain AMMD))).